A 113-amino-acid chain; its full sequence is Nucleoid-associated protein ROP_41370 (113 aa).

This sequence belongs to the YbaB/EbfC family. As to quaternary structure, homodimer.

The protein resides in the cytoplasm. It localises to the nucleoid. In terms of biological role, binds to DNA and alters its conformation. May be involved in regulation of gene expression, nucleoid organization and DNA protection. The polypeptide is Nucleoid-associated protein ROP_41370 (Rhodococcus opacus (strain B4)).